Reading from the N-terminus, the 495-residue chain is ATP synthase subunit beta, chloroplastic (495 aa).

An ATP-binding site is contributed by 172–179; the sequence is GGAGVGKT.

It belongs to the ATPase alpha/beta chains family. In terms of assembly, F-type ATPases have 2 components, CF(1) - the catalytic core - and CF(0) - the membrane proton channel. CF(1) has five subunits: alpha(3), beta(3), gamma(1), delta(1), epsilon(1). CF(0) has four main subunits: a(1), b(1), b'(1) and c(9-12).

Its subcellular location is the plastid. It is found in the chloroplast thylakoid membrane. It catalyses the reaction ATP + H2O + 4 H(+)(in) = ADP + phosphate + 5 H(+)(out). Functionally, produces ATP from ADP in the presence of a proton gradient across the membrane. The catalytic sites are hosted primarily by the beta subunits. This Beaucarnea recurvata (Elephant-foot tree) protein is ATP synthase subunit beta, chloroplastic.